We begin with the raw amino-acid sequence, 360 residues long: Photosystem II protein D1 3 (360 aa).

Transmembrane regions (helical) follow at residues Tyr29 to Ile46, His118 to Leu133, and Trp142 to Ala156. His118 is a chlorophyll a binding site. Tyr126 lines the pheophytin a pocket. Asp170 and Glu189 together coordinate [CaMn4O5] cluster. Residues Phe197–Leu218 form a helical membrane-spanning segment. His198 serves as a coordination point for chlorophyll a. Residues His215 and Ser264–Phe265 each bind a quinone. His215 contacts Fe cation. His272 contributes to the Fe cation binding site. A helical membrane pass occupies residues Phe274–Leu288. [CaMn4O5] cluster contacts are provided by His332, Glu333, Asp342, and Ala344. The propeptide occupies Ala345–Gly360.

Belongs to the reaction center PufL/M/PsbA/D family. As to quaternary structure, PSII is composed of 1 copy each of membrane proteins PsbA, PsbB, PsbC, PsbD, PsbE, PsbF, PsbH, PsbI, PsbJ, PsbK, PsbL, PsbM, PsbT, PsbX, PsbY, PsbZ, Psb30/Ycf12, peripheral proteins PsbO, CyanoQ (PsbQ), PsbU, PsbV and a large number of cofactors. It forms dimeric complexes. The D1/D2 heterodimer binds P680, chlorophylls that are the primary electron donor of PSII, and subsequent electron acceptors. It shares a non-heme iron and each subunit binds pheophytin, quinone, additional chlorophylls, carotenoids and lipids. D1 provides most of the ligands for the Mn4-Ca-O5 cluster of the oxygen-evolving complex (OEC). There is also a Cl(-1) ion associated with D1 and D2, which is required for oxygen evolution. The PSII complex binds additional chlorophylls, carotenoids and specific lipids. serves as cofactor. Tyr-161 forms a radical intermediate that is referred to as redox-active TyrZ, YZ or Y-Z. In terms of processing, C-terminally processed by CtpA; processing is essential to allow assembly of the oxygen-evolving complex and thus photosynthetic growth.

The protein resides in the cellular thylakoid membrane. It catalyses the reaction 2 a plastoquinone + 4 hnu + 2 H2O = 2 a plastoquinol + O2. Functionally, photosystem II (PSII) is a light-driven water:plastoquinone oxidoreductase that uses light energy to abstract electrons from H(2)O, generating O(2) and a proton gradient subsequently used for ATP formation. It consists of a core antenna complex that captures photons, and an electron transfer chain that converts photonic excitation into a charge separation. The D1/D2 (PsbA/PsbD) reaction center heterodimer binds P680, the primary electron donor of PSII as well as several subsequent electron acceptors. The polypeptide is Photosystem II protein D1 3 (Picosynechococcus sp. (strain ATCC 27264 / PCC 7002 / PR-6) (Agmenellum quadruplicatum)).